The sequence spans 268 residues: Myeloid leukemia factor 1 (268 aa).

Phosphoserine is present on residues Ser-6, Ser-8, and Ser-32. The tract at residues 50–125 (RVHNRRGHND…IGDEPPKVFQ (76 aa)) is interaction with COPS3. The interval 208 to 268 (PGRHNLENTR…KGSSVKSNKK (61 aa)) is disordered. Composition is skewed to basic and acidic residues over residues 226 to 237 (PGSRELKRREKP) and 244 to 257 (EHGR…DKLH).

The protein belongs to the MLF family. In terms of assembly, interacts with CENPU. Also interacts with NRBP1/MADM, YWHAZ/14-3-3-zeta and HNRPUL2/MANP. NRBP1 recruits a serine kinase which phosphorylates both itself and MLF1. Phosphorylated MLF1 then binds to YWHAZ and is retained in the cytoplasm. Retained in the nucleus by binding to HNRPUL2. Binds to COPS3/CSN3 which is required for suppression of COP1 and activation of p53. Post-translationally, phosphorylation is required for binding to YWHAZ.

Its subcellular location is the cytoplasm. The protein localises to the nucleus. It localises to the cell projection. It is found in the cilium. The protein resides in the cytoskeleton. Its subcellular location is the cilium basal body. Involved in lineage commitment of primary hemopoietic progenitors by restricting erythroid formation and enhancing myeloid formation. Interferes with erythropoietin-induced erythroid terminal differentiation by preventing cells from exiting the cell cycle through suppression of CDKN1B/p27Kip1 levels. Suppresses COP1 activity via CSN3 which activates p53 and induces cell cycle arrest. Binds DNA and affects the expression of a number of genes so may function as a transcription factor in the nucleus. In Pongo abelii (Sumatran orangutan), this protein is Myeloid leukemia factor 1 (MLF1).